Reading from the N-terminus, the 349-residue chain is ATP phosphoribosyltransferase regulatory subunit (349 aa).

Positions 327–349 (GRGRGVRPRRASARGGRARARPR) are disordered. Residues 330 to 349 (RGVRPRRASARGGRARARPR) are compositionally biased toward basic residues.

Belongs to the class-II aminoacyl-tRNA synthetase family. HisZ subfamily. As to quaternary structure, heteromultimer composed of HisG and HisZ subunits.

Its subcellular location is the cytoplasm. The protein operates within amino-acid biosynthesis; L-histidine biosynthesis; L-histidine from 5-phospho-alpha-D-ribose 1-diphosphate: step 1/9. Required for the first step of histidine biosynthesis. May allow the feedback regulation of ATP phosphoribosyltransferase activity by histidine. This chain is ATP phosphoribosyltransferase regulatory subunit, found in Anaeromyxobacter dehalogenans (strain 2CP-1 / ATCC BAA-258).